A 265-amino-acid chain; its full sequence is Orotidine 5'-phosphate decarboxylase (265 aa).

Substrate contacts are provided by residues D37, 59–61 (KTH), 91–100 (DRKFADIGNT), Y217, and R236. K93 (proton donor) is an active-site residue.

Belongs to the OMP decarboxylase family.

The catalysed reaction is orotidine 5'-phosphate + H(+) = UMP + CO2. It participates in pyrimidine metabolism; UMP biosynthesis via de novo pathway; UMP from orotate: step 2/2. This Saccharomycopsis fibuligera (Yeast) protein is Orotidine 5'-phosphate decarboxylase (URA3).